A 114-amino-acid chain; its full sequence is Large ribosomal subunit protein P2 (114 aa).

Positions 84-114 (TDALQAGSKKGETKEGPKEESDEDMGFGLFD) are disordered. Positions 92–102 (KKGETKEGPKE) are enriched in basic and acidic residues.

The protein belongs to the eukaryotic ribosomal protein P1/P2 family. As to quaternary structure, P1 and P2 exist as dimers at the large ribosomal subunit. In terms of processing, phosphorylated.

In terms of biological role, plays an important role in the elongation step of protein synthesis. The protein is Large ribosomal subunit protein P2 (rpp-2) of Brugia malayi (Filarial nematode worm).